The following is a 511-amino-acid chain: Keratin, type II cytoskeletal 72 (511 aa).

Residues 1–124 (MSRQLTHFPR…DPEIQRVRAQ (124 aa)) form a head region. The segment at 125–160 (EREQIKALNNKFASFIDKVRFLEQQNQVLETKWNLL) is coil 1A. In terms of domain architecture, IF rod spans 125–438 (EREQIKALNN…KLLESEECRM (314 aa)). Residues 161 to 179 (QQLDLNNCRKNLEPIYEGY) form a linker 1 region. The tract at residues 180 to 271 (ISNLQKQLEM…CLYEGEITQI (92 aa)) is coil 1B. The linker 12 stretch occupies residues 272–295 (QSHISDTSIVLSMDNNRDLDLDSI). A coil 2 region spans residues 296–434 (IAEVRAQYEE…ATYRKLLESE (139 aa)). Residues 435-511 (ECRMSGEYPN…SSCATKKASR (77 aa)) form a tail region. The tract at residues 486 to 511 (GSCGSELKDPLAKTSGSSCATKKASR) is disordered.

This sequence belongs to the intermediate filament family. As to quaternary structure, heterotetramer of two type I and two type II keratins. Highly expressed in hair follicles from scalp and eyebrow. Also expressed in palmoplantar epidermis. Not expressed in face skin despite the presence of fine hairs histologically. In hair, it is specifically present in the inner root sheath (IRS) of the hair follicle. Present in the IRS cuticle, but not in Henle or Huxley layers of the IRS. In the IRS cuticle, its presence is delayed up to the height of the apex of the dermal papilla (at protein level).

Has a role in hair formation. Specific component of keratin intermediate filaments in the inner root sheath (IRS) of the hair follicle. This Homo sapiens (Human) protein is Keratin, type II cytoskeletal 72 (KRT72).